A 329-amino-acid polypeptide reads, in one-letter code: Interleukin-12 subunit beta (329 aa).

The signal sequence occupies residues 1 to 22 (MCHQWLVLSWFSLVLLASPLMA). The 78-residue stretch at 29-106 (DVYVVELDWY…LSHSHLLLHK (78 aa)) folds into the Ig-like C2-type domain. Cysteine 50 and cysteine 90 form a disulfide bridge. Asparagine 125, asparagine 135, and asparagine 223 each carry an N-linked (GlcNAc...) asparagine glycan. A Fibronectin type-III domain is found at 238–329 (PPKNLQLKPL…WSEWASVSCS (92 aa)).

This sequence belongs to the IL-12B family. Heterodimer with IL12A; disulfide-linked. The heterodimer is known as interleukin IL-12. Heterodimer with IL23A; disulfide-linked. The heterodimer is known as interleukin IL-23. Also secreted as a monomer. Interacts with NBR1; this interaction promotes IL-12 secretion.

It is found in the secreted. Its function is as follows. Cytokine that can act as a growth factor for activated T and NK cells, enhance the lytic activity of NK/lymphokine-activated killer cells, and stimulate the production of IFN-gamma by resting PBMC. Associates with IL23A to form the IL-23 interleukin, a heterodimeric cytokine which functions in innate and adaptive immunity. IL-23 may constitute with IL-17 an acute response to infection in peripheral tissues. IL-23 binds to a heterodimeric receptor complex composed of IL12RB1 and IL23R, activates the Jak-Stat signaling cascade, stimulates memory rather than naive T-cells and promotes production of pro-inflammatory cytokines. IL-23 induces autoimmune inflammation and thus may be responsible for autoimmune inflammatory diseases and may be important for tumorigenesis. The chain is Interleukin-12 subunit beta (IL12B) from Equus caballus (Horse).